The chain runs to 1070 residues: DNA-directed RNA polymerase subunit beta (1070 aa).

The protein belongs to the RNA polymerase beta chain family. In plastids the minimal PEP RNA polymerase catalytic core is composed of four subunits: alpha, beta, beta', and beta''. When a (nuclear-encoded) sigma factor is associated with the core the holoenzyme is formed, which can initiate transcription.

The protein resides in the plastid. It is found in the chloroplast. The catalysed reaction is RNA(n) + a ribonucleoside 5'-triphosphate = RNA(n+1) + diphosphate. Its function is as follows. DNA-dependent RNA polymerase catalyzes the transcription of DNA into RNA using the four ribonucleoside triphosphates as substrates. This chain is DNA-directed RNA polymerase subunit beta, found in Phaseolus vulgaris (Kidney bean).